The chain runs to 321 residues: Transaldolase (321 aa).

The Schiff-base intermediate with substrate role is filled by K132.

The protein belongs to the transaldolase family. Type 1 subfamily. Homodimer.

Its subcellular location is the cytoplasm. The catalysed reaction is D-sedoheptulose 7-phosphate + D-glyceraldehyde 3-phosphate = D-erythrose 4-phosphate + beta-D-fructose 6-phosphate. It participates in carbohydrate degradation; pentose phosphate pathway; D-glyceraldehyde 3-phosphate and beta-D-fructose 6-phosphate from D-ribose 5-phosphate and D-xylulose 5-phosphate (non-oxidative stage): step 2/3. Functionally, transaldolase is important for the balance of metabolites in the pentose-phosphate pathway. The sequence is that of Transaldolase from Agrobacterium fabrum (strain C58 / ATCC 33970) (Agrobacterium tumefaciens (strain C58)).